The following is a 264-amino-acid chain: S-adenosylmethionine decarboxylase proenzyme (264 aa).

The Schiff-base intermediate with substrate; via pyruvic acid role is filled by serine 111. Serine 111 bears the Pyruvic acid (Ser); by autocatalysis mark. Histidine 116 (proton acceptor; for processing activity) is an active-site residue. The active-site Proton donor; for catalytic activity is the cysteine 139.

The protein belongs to the prokaryotic AdoMetDC family. Type 2 subfamily. In terms of assembly, heterooctamer of four alpha and four beta chains arranged as a tetramer of alpha/beta heterodimers. Requires pyruvate as cofactor. In terms of processing, is synthesized initially as an inactive proenzyme. Formation of the active enzyme involves a self-maturation process in which the active site pyruvoyl group is generated from an internal serine residue via an autocatalytic post-translational modification. Two non-identical subunits are generated from the proenzyme in this reaction, and the pyruvate is formed at the N-terminus of the alpha chain, which is derived from the carboxyl end of the proenzyme. The post-translation cleavage follows an unusual pathway, termed non-hydrolytic serinolysis, in which the side chain hydroxyl group of the serine supplies its oxygen atom to form the C-terminus of the beta chain, while the remainder of the serine residue undergoes an oxidative deamination to produce ammonia and the pyruvoyl group blocking the N-terminus of the alpha chain.

It carries out the reaction S-adenosyl-L-methionine + H(+) = S-adenosyl 3-(methylsulfanyl)propylamine + CO2. It functions in the pathway amine and polyamine biosynthesis; S-adenosylmethioninamine biosynthesis; S-adenosylmethioninamine from S-adenosyl-L-methionine: step 1/1. Catalyzes the decarboxylation of S-adenosylmethionine to S-adenosylmethioninamine (dcAdoMet), the propylamine donor required for the synthesis of the polyamines spermine and spermidine from the diamine putrescine. In Geobacillus kaustophilus (strain HTA426), this protein is S-adenosylmethionine decarboxylase proenzyme.